Consider the following 119-residue polypeptide: Gas vesicle protein O1 (119 aa).

Positions 1–12 are enriched in basic and acidic residues; that stretch reads MADPANDRSERE. Residues 1 to 48 are disordered; the sequence is MADPANDRSEREEGGEDDETPPASDGNPSPSANSFTLSNAQTRAREAA. The segment covering 26–42 has biased composition (polar residues); that stretch reads GNPSPSANSFTLSNAQT.

It belongs to the gas vesicle GvpO family. As to quaternary structure, forms homodimers, forms a GvpN1-GvpO1 heterodimer, interacts with GvpC1 (via the latter's C-terminus), GvpF1, GvpI1 and GvpL1, might interact with GvpA1.

The protein resides in the gas vesicle. It localises to the cytoplasm. In terms of biological role, a minor component of the gas vesicle, also found in soluble extracts. May play a role in transcription and/or RNA stability and in GV assembly. Gas vesicles are hollow, gas filled proteinaceous nanostructures found in several microbial planktonic microorganisms. They allow positioning of halobacteria at the optimal depth for growth in the poorly aerated, shallow brine pools of their habitat. Expression of a 9.5 kb p-vac DNA fragment containing 2 divergently transcribed regions (gvpD-gvpE-gvpF-gvpG-gvpH-gvpI-gvpJ-gvpK-gvpL-gvpM and gvpA-gvpC-gvpN-gvpO) allows H.volcanii to produce gas vesicles. A minimal gas vesicle can be made in H.volcanii by gvpA1-gvpO1 gvpF1-gvpG1-gvpJ1-gvpK1-gvpL1-gvpM1; lack of enough GvpJ1 prevents formation. The same region restores gas vesicle production in H.halobium without the p-vac locus, but it still has the c-vac locus. This chain is Gas vesicle protein O1, found in Halobacterium salinarum (strain ATCC 700922 / JCM 11081 / NRC-1) (Halobacterium halobium).